We begin with the raw amino-acid sequence, 339 residues long: 3-isopropylmalate dehydrogenase (339 aa).

4 residues coordinate substrate: Arg-88, Arg-98, Arg-122, and Asp-212. Residues Asp-212, Asp-236, and Asp-240 each coordinate Mg(2+). NAD(+) is bound at residue 272 to 284 (GSAPDIAGQGIAD).

It belongs to the isocitrate and isopropylmalate dehydrogenases family. LeuB type 2 subfamily. As to quaternary structure, homodimer. Mg(2+) serves as cofactor. It depends on Mn(2+) as a cofactor.

It localises to the cytoplasm. It carries out the reaction (2R,3S)-3-isopropylmalate + NAD(+) = 4-methyl-2-oxopentanoate + CO2 + NADH. It functions in the pathway amino-acid biosynthesis; L-leucine biosynthesis; L-leucine from 3-methyl-2-oxobutanoate: step 3/4. In terms of biological role, catalyzes the oxidation of 3-carboxy-2-hydroxy-4-methylpentanoate (3-isopropylmalate) to 3-carboxy-4-methyl-2-oxopentanoate. The product decarboxylates to 4-methyl-2 oxopentanoate. This is 3-isopropylmalate dehydrogenase from Corynebacterium urealyticum (strain ATCC 43042 / DSM 7109).